The following is a 100-amino-acid chain: Large ribosomal subunit protein uL23 (100 aa).

This sequence belongs to the universal ribosomal protein uL23 family. Part of the 50S ribosomal subunit. Contacts protein L29, and trigger factor when it is bound to the ribosome.

One of the early assembly proteins it binds 23S rRNA. One of the proteins that surrounds the polypeptide exit tunnel on the outside of the ribosome. Forms the main docking site for trigger factor binding to the ribosome. The polypeptide is Large ribosomal subunit protein uL23 (Yersinia pestis bv. Antiqua (strain Antiqua)).